Consider the following 358-residue polypeptide: CCAAT/enhancer-binding protein alpha (358 aa).

Residues 1–55 (MESADFYEAEPRPPMSSHLQSPPHAPSNAAFGFPRGAGPAPPPAPPAAPEPLGGI) form a disordered region. The interval 1-70 (MESADFYEAE…SIDISAYIDP (70 aa)) is required to repress E2F1:TFDP1-mediated transcription, to inhibit cell cycle and to induce adipocyte differentiation. A compositionally biased stretch (low complexity) spans 29–38 (AAFGFPRGAG). A compositionally biased stretch (pro residues) spans 39 to 49 (PAPPPAPPAAP). The interval 54 to 72 (GICEHETSIDISAYIDPAA) is required for interaction with TRIB1. The segment at 126-200 (PPGYGCAAAG…HASPAHLAAP (75 aa)) is required to induce adipocyte differentiation. N6-acetyllysine; alternate is present on Lys-159. Residue Lys-159 forms a Glycyl lysine isopeptide (Lys-Gly) (interchain with G-Cter in SUMO); alternate linkage. A Glycyl lysine isopeptide (Lys-Gly) (interchain with G-Cter in SUMO2); alternate cross-link involves residue Lys-159. Disordered regions lie at residues 176–195 (LFPY…ASPA) and 213–310 (TMHL…NVET). Residues 179–191 (YQPPPPPPPPHPH) are compositionally biased toward pro residues. The tract at residues 180-194 (QPPPPPPPPHPHASP) is required to functionally cooperate with SREBF1 in promoter activation. A Phosphoserine modification is found at Ser-193. A compositionally biased stretch (pro residues) spans 220–234 (HPTPPPTPVPSPHPA). 2 positions are modified to phosphothreonine; by GSK3: Thr-222 and Thr-226. Ser-230 carries the phosphoserine; by GSK3 modification. An interaction with FOXO1 region spans residues 240-358 (AGLPGPGGSL…SLVKAMGNCA (119 aa)). Residues 261–271 (TGGGGGGGAGA) are compositionally biased toward gly residues. Over residues 276–292 (KSVDKNSNEYRVRRERN) the composition is skewed to basic and acidic residues. Positions 282-345 (SNEYRVRRER…DTLRGIFRQL (64 aa)) constitute a bZIP domain. A DNA-binding region spans residues 285–300 (YRVRRERNNIAVRKSR). The basic motif stretch occupies residues 286 to 313 (RVRRERNNIAVRKSRDKAKQRNVETQQK). The tract at residues 317 to 345 (LTSDNDRLRKRVEQLSRELDTLRGIFRQL) is leucine-zipper.

This sequence belongs to the bZIP family. C/EBP subfamily. As to quaternary structure, binds DNA as a homodimer and as a heterodimer. Can form stable heterodimers with CEBPB, CEBPD, CEBPE and CEBPG. Can form stable homodimers (also isoform 2 and isoform 3 dimers) and heterodimers with CEBPB (with isoform 2 and isoform 3) and CEBPG. Interacts with PRDM16. Interacts with UBN1. Interacts with ZNF638; this interaction increases transcriptional activation. Interacts with the complex TFDP2:E2F1; the interaction prevents CEBPA binding to target gene promoters and represses its transcriptional activity. Interacts with RB1. Interacts (when phosphorylated at Ser-193) with CDK2, CDK4, E2F4 and SMARCA2. Interacts with SREBPF1. Interacts with FOXO1 (via the Fork-head domain); the interaction increases when FOXO1 is deacetylated. Interacts with SIX1. Interacts (via recognition sequence) with TRIB1. Interacts with TAF1A and UBTF. In terms of assembly, interacts with NPM1. Post-translationally, sumoylated, sumoylation blocks the inhibitory effect on cell proliferation by disrupting the interaction with SMARCA2. In terms of processing, phosphorylation at Ser-193 is required for interaction with CDK2, CDK4 and SWI/SNF complex leading to cell cycle inhibition. Dephosphorylated at Ser-193 by protein phosphatase 2A (PP2A) through PI3K/AKT signaling pathway regulation. Phosphorylation at Thr-222 and Thr-226 by GSK3 is constitutive in adipose tissue and lung. In liver, both Thr-222 and Thr-226 are phosphorylated only during feeding but not during fasting. Phosphorylation of the GSK3 consensus sites selectively decreases transactivation activity on IRE-controlled promoters. Ubiquitinated by COP1 upon interaction with TRIB1. In terms of tissue distribution, isoform 2 and isoform 3 are expressed in liver (at protein level).

Its subcellular location is the nucleus. It localises to the nucleolus. Functionally, transcription factor that coordinates proliferation arrest and the differentiation of myeloid progenitors, adipocytes, hepatocytes, and cells of the lung and the placenta. Binds directly to the consensus DNA sequence 5'-T[TG]NNGNAA[TG]-3' acting as an activator on distinct target genes. During early embryogenesis, plays essential and redundant functions with CEBPB. Essential for the transition from common myeloid progenitors (CMP) to granulocyte/monocyte progenitors (GMP). Critical for the proper development of the liver and the lung. Necessary for terminal adipocyte differentiation, is required for postnatal maintenance of systemic energy homeostasis and lipid storage. To regulate these different processes at the proper moment and tissue, interplays with other transcription factors and modulators. Down-regulates the expression of genes that maintain cells in an undifferentiated and proliferative state through E2F1 repression, which is critical for its ability to induce adipocyte and granulocyte terminal differentiation. Reciprocally E2F1 blocks adipocyte differentiation by binding to specific promoters and repressing CEBPA binding to its target gene promoters. Proliferation arrest also depends on a functional binding to SWI/SNF complex. In liver, regulates gluconeogenesis and lipogenesis through different mechanisms. To regulate gluconeogenesis, functionally cooperates with FOXO1 binding to IRE-controlled promoters and regulating the expression of target genes such as PCK1 or G6PC1. To modulate lipogenesis, interacts and transcriptionally synergizes with SREBF1 in promoter activation of specific lipogenic target genes such as ACAS2. In adipose tissue, seems to act as FOXO1 coactivator accessing to ADIPOQ promoter through FOXO1 binding sites. Can act as dominant-negative. Binds DNA and have transctivation activity, even if much less efficiently than isoform 2. Does not inhibit cell proliferation. Its function is as follows. Directly and specifically enhances ribosomal DNA transcription interacting with RNA polymerase I-specific cofactors and inducing histone acetylation. The sequence is that of CCAAT/enhancer-binding protein alpha from Rattus norvegicus (Rat).